Consider the following 269-residue polypeptide: Putative hydro-lyase M446_2125 (269 aa).

The protein belongs to the D-glutamate cyclase family.

In Methylobacterium sp. (strain 4-46), this protein is Putative hydro-lyase M446_2125.